Reading from the N-terminus, the 238-residue chain is Ribonuclease PH (238 aa).

Residues Arg-86 and 124–126 (GTR) contribute to the phosphate site.

The protein belongs to the RNase PH family. Homohexameric ring arranged as a trimer of dimers.

The enzyme catalyses tRNA(n+1) + phosphate = tRNA(n) + a ribonucleoside 5'-diphosphate. Functionally, phosphorolytic 3'-5' exoribonuclease that plays an important role in tRNA 3'-end maturation. Removes nucleotide residues following the 3'-CCA terminus of tRNAs; can also add nucleotides to the ends of RNA molecules by using nucleoside diphosphates as substrates, but this may not be physiologically important. Probably plays a role in initiation of 16S rRNA degradation (leading to ribosome degradation) during starvation. This chain is Ribonuclease PH, found in Actinobacillus succinogenes (strain ATCC 55618 / DSM 22257 / CCUG 43843 / 130Z).